The sequence spans 95 residues: MKVDKETIEYVANLARLRLSEKEKEKLALDLESIISYVDKLNELDTSKIIPTDHVIPIKNVFRDDEVRDSYPKDKMLMNAPEKEDGCFKVPKVVE.

Belongs to the GatC family. In terms of assembly, heterotrimer of A, B and C subunits.

The catalysed reaction is L-glutamyl-tRNA(Gln) + L-glutamine + ATP + H2O = L-glutaminyl-tRNA(Gln) + L-glutamate + ADP + phosphate + H(+). The enzyme catalyses L-aspartyl-tRNA(Asn) + L-glutamine + ATP + H2O = L-asparaginyl-tRNA(Asn) + L-glutamate + ADP + phosphate + 2 H(+). Its function is as follows. Allows the formation of correctly charged Asn-tRNA(Asn) or Gln-tRNA(Gln) through the transamidation of misacylated Asp-tRNA(Asn) or Glu-tRNA(Gln) in organisms which lack either or both of asparaginyl-tRNA or glutaminyl-tRNA synthetases. The reaction takes place in the presence of glutamine and ATP through an activated phospho-Asp-tRNA(Asn) or phospho-Glu-tRNA(Gln). This Acetivibrio thermocellus (strain ATCC 27405 / DSM 1237 / JCM 9322 / NBRC 103400 / NCIMB 10682 / NRRL B-4536 / VPI 7372) (Clostridium thermocellum) protein is Aspartyl/glutamyl-tRNA(Asn/Gln) amidotransferase subunit C.